Here is a 426-residue protein sequence, read N- to C-terminus: Enolase (426 aa).

Glutamine 163 serves as a coordination point for (2R)-2-phosphoglycerate. The active-site Proton donor is glutamate 205. Mg(2+) contacts are provided by aspartate 242, glutamate 285, and aspartate 312. Lysine 337, arginine 366, serine 367, and lysine 388 together coordinate (2R)-2-phosphoglycerate. The active-site Proton acceptor is lysine 337.

Belongs to the enolase family. Mg(2+) serves as cofactor.

It is found in the cytoplasm. The protein localises to the secreted. Its subcellular location is the cell surface. It catalyses the reaction (2R)-2-phosphoglycerate = phosphoenolpyruvate + H2O. Its pathway is carbohydrate degradation; glycolysis; pyruvate from D-glyceraldehyde 3-phosphate: step 4/5. Functionally, catalyzes the reversible conversion of 2-phosphoglycerate (2-PG) into phosphoenolpyruvate (PEP). It is essential for the degradation of carbohydrates via glycolysis. This is Enolase from Gluconobacter oxydans (strain 621H) (Gluconobacter suboxydans).